A 265-amino-acid polypeptide reads, in one-letter code: Energy-coupling factor transporter transmembrane protein EcfT (265 aa).

5 consecutive transmembrane segments (helical) span residues 32-52, 72-92, 115-135, 150-170, and 245-265; these read MVLL…VFII, LVII…GRVI, LIML…IALT, VPAH…PTLM, and LAAF…RFIW.

Belongs to the energy-coupling factor EcfT family. In terms of assembly, forms a stable energy-coupling factor (ECF) transporter complex composed of 2 membrane-embedded substrate-binding proteins (S component), 2 ATP-binding proteins (A component) and 2 transmembrane proteins (T component). May be able to interact with more than 1 S component at a time.

The protein resides in the cell membrane. In terms of biological role, transmembrane (T) component of an energy-coupling factor (ECF) ABC-transporter complex. Unlike classic ABC transporters this ECF transporter provides the energy necessary to transport a number of different substrates. This chain is Energy-coupling factor transporter transmembrane protein EcfT, found in Thermosediminibacter oceani (strain ATCC BAA-1034 / DSM 16646 / JW/IW-1228P).